The primary structure comprises 179 residues: MISRPESSLSGLESSQEVQKKTWNPRNYSARLTENIGLPLILLEKHNPWPAYVAYISPAVTRITEKGWARDLEYIYAAEKNGKPVKRSKHSAVLLKRRKPSKPSELMLKETLSETMLPTWECSTIYVSPTFVPEPAQLQMDVREGPTSNYNKIIFSKRPAMRKLPFGLLQASKEMHTKD.

A compositionally biased stretch (low complexity) spans 1 to 15; that stretch reads MISRPESSLSGLESS. The interval 1–20 is disordered; it reads MISRPESSLSGLESSQEVQK.

This Mus musculus (Mouse) protein is CMT1A duplicated region transcript 4 protein homolog (Cdrt4).